The sequence spans 239 residues: 2-C-methyl-D-erythritol 4-phosphate cytidylyltransferase (239 aa).

Belongs to the IspD/TarI cytidylyltransferase family. IspD subfamily.

The enzyme catalyses 2-C-methyl-D-erythritol 4-phosphate + CTP + H(+) = 4-CDP-2-C-methyl-D-erythritol + diphosphate. Its pathway is isoprenoid biosynthesis; isopentenyl diphosphate biosynthesis via DXP pathway; isopentenyl diphosphate from 1-deoxy-D-xylulose 5-phosphate: step 2/6. Functionally, catalyzes the formation of 4-diphosphocytidyl-2-C-methyl-D-erythritol from CTP and 2-C-methyl-D-erythritol 4-phosphate (MEP). The sequence is that of 2-C-methyl-D-erythritol 4-phosphate cytidylyltransferase from Acidobacterium capsulatum (strain ATCC 51196 / DSM 11244 / BCRC 80197 / JCM 7670 / NBRC 15755 / NCIMB 13165 / 161).